The chain runs to 546 residues: Chaperonin GroEL (546 aa).

Residues 30 to 33 (TLGP), Lys51, 87 to 91 (DGTTT), Gly415, 479 to 481 (NAA), and Asp495 each bind ATP. The interval 527–546 (DESAAPAMPGGMGGMGDMGM) is disordered. Positions 536–546 (GGMGGMGDMGM) are enriched in gly residues.

Belongs to the chaperonin (HSP60) family. As to quaternary structure, forms a cylinder of 14 subunits composed of two heptameric rings stacked back-to-back. Interacts with the co-chaperonin GroES.

The protein localises to the cytoplasm. The catalysed reaction is ATP + H2O + a folded polypeptide = ADP + phosphate + an unfolded polypeptide.. In terms of biological role, together with its co-chaperonin GroES, plays an essential role in assisting protein folding. The GroEL-GroES system forms a nano-cage that allows encapsulation of the non-native substrate proteins and provides a physical environment optimized to promote and accelerate protein folding. The chain is Chaperonin GroEL from Acidovorax ebreus (strain TPSY) (Diaphorobacter sp. (strain TPSY)).